A 558-amino-acid chain; its full sequence is Ribonuclease J (558 aa).

Zn(2+)-binding residues include His-81, His-83, Asp-85, His-86, His-148, and Asp-170. 371–375 (HVSGH) serves as a coordination point for substrate. Residue His-397 participates in Zn(2+) binding.

Belongs to the metallo-beta-lactamase superfamily. RNA-metabolizing metallo-beta-lactamase-like family. Bacterial RNase J subfamily. As to quaternary structure, homodimer. The cofactor is Zn(2+).

It is found in the cytoplasm. Functionally, an RNase that has endonuclease and 5'-3' exonuclease activity. The 5'-exonuclease activity acts on 5'-monophosphate but not 5'-triphosphate ends. Endonuclease activity can cleave within 4 nucleotides of the 5'-end of a triphosphorylated RNA. Plays the major role in pre-23S rRNA maturation, and a minor role in processing of pre-5S and pre-16S rRNA. The polypeptide is Ribonuclease J (Mycolicibacterium smegmatis (strain ATCC 700084 / mc(2)155) (Mycobacterium smegmatis)).